Consider the following 444-residue polypeptide: Argininosuccinate synthase (444 aa).

Residues 18-26 (AFSGGLDTS) and alanine 44 contribute to the ATP site. Tyrosine 100 is a binding site for L-citrulline. The ATP site is built by glycine 130 and threonine 132. The L-aspartate site is built by threonine 132, asparagine 136, and aspartate 137. Asparagine 136 provides a ligand contact to L-citrulline. Aspartate 137 is an ATP binding site. L-citrulline-binding residues include arginine 140 and serine 193. Aspartate 195 is a binding site for ATP. L-citrulline-binding residues include threonine 202, glutamate 204, and glutamate 281.

It belongs to the argininosuccinate synthase family. Type 2 subfamily. Homotetramer.

The protein resides in the cytoplasm. The catalysed reaction is L-citrulline + L-aspartate + ATP = 2-(N(omega)-L-arginino)succinate + AMP + diphosphate + H(+). The protein operates within amino-acid biosynthesis; L-arginine biosynthesis; L-arginine from L-ornithine and carbamoyl phosphate: step 2/3. The chain is Argininosuccinate synthase from Haemophilus influenzae (strain PittGG).